A 707-amino-acid polypeptide reads, in one-letter code: Polyribonucleotide nucleotidyltransferase (707 aa).

Mg(2+)-binding residues include aspartate 488 and aspartate 494. Residues 554–613 (PRLFTMKINQDKIREVIGKGGETIRSITAETGTEINIAEDGTITIAATTQEAGDAAKKRI) enclose the KH domain. The S1 motif domain maps to 623–693 (GKVYEGTVVK…DRGRVRLSIK (71 aa)).

This sequence belongs to the polyribonucleotide nucleotidyltransferase family. Mg(2+) is required as a cofactor.

Its subcellular location is the cytoplasm. The enzyme catalyses RNA(n+1) + phosphate = RNA(n) + a ribonucleoside 5'-diphosphate. In terms of biological role, involved in mRNA degradation. Catalyzes the phosphorolysis of single-stranded polyribonucleotides processively in the 3'- to 5'-direction. The chain is Polyribonucleotide nucleotidyltransferase from Neisseria meningitidis serogroup B (strain ATCC BAA-335 / MC58).